The sequence spans 570 residues: Urease subunit alpha 1 (570 aa).

Positions 131–570 (GGIDTHVHFI…VPMAQRYFLF (440 aa)) constitute a Urease domain. Ni(2+)-binding residues include His136, His138, and Lys219. Lys219 bears the N6-carboxylysine mark. A substrate-binding site is contributed by His221. Residues His248 and His274 each contribute to the Ni(2+) site. His322 serves as the catalytic Proton donor. Asp362 is a binding site for Ni(2+).

It belongs to the metallo-dependent hydrolases superfamily. Urease alpha subunit family. Heterotrimer of UreA (gamma), UreB (beta) and UreC (alpha) subunits. Three heterotrimers associate to form the active enzyme. Requires Ni cation as cofactor. Post-translationally, carboxylation allows a single lysine to coordinate two nickel ions.

It is found in the cytoplasm. The enzyme catalyses urea + 2 H2O + H(+) = hydrogencarbonate + 2 NH4(+). It participates in nitrogen metabolism; urea degradation; CO(2) and NH(3) from urea (urease route): step 1/1. Disrupting the ure1 operon causes loss of urease activity, decreased resistance to low pH killing in vitro and decreased pathogen survival when inoculated in BALB/c mice by gavage. This chain is Urease subunit alpha 1, found in Brucella suis biovar 1 (strain 1330).